A 140-amino-acid polypeptide reads, in one-letter code: Calcitonin (140 aa).

A signal peptide spans 1 to 25 (MGFWKFSPFLPLSILVLYQVGIIQA). Positions 26–81 (APFRSALESLPDPAVLPEEESRLLLAALVKDYVQMKVRALEQEQETGGASLDSPRA) are excised as a propeptide. Cys-84 and Cys-90 are disulfide-bonded. Pro-115 bears the Proline amide mark. A propeptide spanning residues 120 to 140 (VMARGLERDHGPHIGTSQDAY) is cleaved from the precursor.

The protein belongs to the calcitonin family.

Its subcellular location is the secreted. In terms of biological role, calcitonin is a peptide hormone that causes a rapid but short-lived drop in the level of calcium and phosphate in blood by promoting the incorporation of those ions in the bones. Calcitonin function is mediated by the calcitonin receptor/CALCR and the CALCR-RAMP2 (AMYR2) receptor complex. The polypeptide is Calcitonin (CALCA) (Equus caballus (Horse)).